The chain runs to 315 residues: Olfactory receptor 3A3 (315 aa).

Residues 1-28 (MESEAGTNRTAVAEFMLLGLVQTEEMQS) are Extracellular-facing. N8 is a glycosylation site (N-linked (GlcNAc...) asparagine). Residues 29 to 52 (VIFVLLLFAYLVTTGGNLSILAAI) traverse the membrane as a helical segment. Topologically, residues 53-60 (LVEPKLHT) are cytoplasmic. A helical membrane pass occupies residues 61-82 (PMYFFLGNLSVLDVGCITVTVP). The Extracellular segment spans residues 83–103 (AMLGRLLSHKSTISYDACLSQ). C100 and C192 form a disulfide bridge. The chain crosses the membrane as a helical span at residues 104–123 (LFFFHLLAGMDCFLLTAMAY). Topologically, residues 124–143 (DRFLAICRPLTYSTHMNQRV) are cytoplasmic. A helical membrane pass occupies residues 144 to 161 (QRMLVAVSWTCAFTNALT). Residues 162 to 199 (HTIALTTLNFCGPSVINHFYCDLPQLFQLSCSSTQLNE) lie on the Extracellular side of the membrane. Residues 200–222 (LLLFVAAAVMAVAPLVFISVSYA) traverse the membrane as a helical segment. Over 223–239 (HVVAAVLQIHSAEGRKK) the chain is Cytoplasmic. The chain crosses the membrane as a helical span at residues 240–262 (AFSTCGSHLTVVGIFYGTGVFSY). Topologically, residues 263-275 (MRLGSVESSDKDK) are extracellular. A helical membrane pass occupies residues 276-295 (GVGVFMTVINPMLNPLIYSL). At 296 to 315 (RNTDVQGALCQLLVVKRSLT) the chain is on the cytoplasmic side.

This sequence belongs to the G-protein coupled receptor 1 family.

It is found in the cell membrane. Functionally, odorant receptor. The chain is Olfactory receptor 3A3 (OR3A3) from Pan troglodytes (Chimpanzee).